The primary structure comprises 132 residues: Small ribosomal subunit protein uS8 (132 aa).

The protein belongs to the universal ribosomal protein uS8 family. Part of the 30S ribosomal subunit. Contacts proteins S5 and S12.

One of the primary rRNA binding proteins, it binds directly to 16S rRNA central domain where it helps coordinate assembly of the platform of the 30S subunit. This Flavobacterium johnsoniae (strain ATCC 17061 / DSM 2064 / JCM 8514 / BCRC 14874 / CCUG 350202 / NBRC 14942 / NCIMB 11054 / UW101) (Cytophaga johnsonae) protein is Small ribosomal subunit protein uS8.